The following is a 514-amino-acid chain: DNA-(apurinic or apyrimidinic site) endonuclease 2 (514 aa).

Residues asparagine 8 and glutamate 48 each coordinate Mg(2+). Residue tyrosine 156 is part of the active site. Positions 197, 199, 303, and 304 each coordinate Mg(2+). Aspartate 197 functions as the Proton donor/acceptor in the catalytic mechanism. Residue histidine 304 is the Proton acceptor of the active site. The segment at 359-417 (PSNQTQVHMRKNKARVRSTRSRPSKTGSSRGQKNLMSYFQPSSSGPQTSNLDLPSLGTL) is disordered. Positions 366 to 381 (HMRKNKARVRSTRSRP) are enriched in basic residues. Residue lysine 371 forms a Glycyl lysine isopeptide (Lys-Gly) (interchain with G-Cter in ubiquitin) linkage. The segment covering 382–410 (SKTGSSRGQKNLMSYFQPSSSGPQTSNLD) has biased composition (polar residues). A required for the interaction and colocalization with PCNA in nuclear foci in presence of oxidative-induced DNA damaging agents region spans residues 390-397 (QKNLMSYF). The Zn(2+) site is built by cysteine 465, histidine 468, cysteine 491, and cysteine 505. The GRF-type zinc-finger motif lies at 465–514 (CGGHREPCVMRTVKKPGPNLGRHFYMCARPQGPPTDPSSRCNFFLWSRPS).

It belongs to the DNA repair enzymes AP/ExoA family. As to quaternary structure, interacts with PCNA; this interaction is triggered by reactive oxygen species and increased by misincorporation of uracil in nuclear DNA. The cofactor is Mg(2+). Requires Mn(2+) as cofactor. In terms of processing, ubiquitinated by the CUL9-RBX1 complex. Ubiquitinated by MKRN3 at Lys-371 leading to proteasomal degradation.

Its subcellular location is the nucleus. The protein localises to the cytoplasm. It is found in the mitochondrion. The enzyme catalyses Exonucleolytic cleavage in the 3'- to 5'-direction to yield nucleoside 5'-phosphates.. 3'-5' exonuclease activity is activated by sodium and manganese. 3'-5' exonuclease and 3'-phosphodiesterase activities are stimulated in presence of PCNA. In terms of biological role, functions as a weak apurinic/apyrimidinic (AP) endodeoxyribonuclease in the DNA base excision repair (BER) pathway of DNA lesions induced by oxidative and alkylating agents. Initiates repair of AP sites in DNA by catalyzing hydrolytic incision of the phosphodiester backbone immediately adjacent to the damage, generating a single-strand break with 5'-deoxyribose phosphate and 3'-hydroxyl ends. Also displays double-stranded DNA 3'-5' exonuclease, 3'-phosphodiesterase activities. Shows robust 3'-5' exonuclease activity on 3'-recessed heteroduplex DNA and is able to remove mismatched nucleotides preferentially. Shows fairly strong 3'-phosphodiesterase activity involved in the removal of 3'-damaged termini formed in DNA by oxidative agents. In the nucleus functions in the PCNA-dependent BER pathway. Plays a role in reversing blocked 3' DNA ends, problematic lesions that preclude DNA synthesis. Required for somatic hypermutation (SHM) and DNA cleavage step of class switch recombination (CSR) of immunoglobulin genes. Required for proper cell cycle progression during proliferation of peripheral lymphocytes. The protein is DNA-(apurinic or apyrimidinic site) endonuclease 2 (APEX2) of Bos taurus (Bovine).